The following is a 691-amino-acid chain: Elongation factor G (691 aa).

The tr-type G domain maps to 8-282; the sequence is EQTRNIGIMA…AVIDYLPAPT (275 aa). GTP is bound by residues 17-24, 81-85, and 135-138; these read AHIDAGKT, DTPGH, and NKMD.

The protein belongs to the TRAFAC class translation factor GTPase superfamily. Classic translation factor GTPase family. EF-G/EF-2 subfamily.

It localises to the cytoplasm. Functionally, catalyzes the GTP-dependent ribosomal translocation step during translation elongation. During this step, the ribosome changes from the pre-translocational (PRE) to the post-translocational (POST) state as the newly formed A-site-bound peptidyl-tRNA and P-site-bound deacylated tRNA move to the P and E sites, respectively. Catalyzes the coordinated movement of the two tRNA molecules, the mRNA and conformational changes in the ribosome. The sequence is that of Elongation factor G from Natranaerobius thermophilus (strain ATCC BAA-1301 / DSM 18059 / JW/NM-WN-LF).